A 174-amino-acid polypeptide reads, in one-letter code: UPF0336 protein MAP_3996c (174 aa).

The region spanning 11–131 (IGSHYRAPDY…VLAEIRSEVT (121 aa)) is the MaoC-like domain.

It belongs to the UPF0336 family.

The protein is UPF0336 protein MAP_3996c of Mycolicibacterium paratuberculosis (strain ATCC BAA-968 / K-10) (Mycobacterium paratuberculosis).